Here is a 437-residue protein sequence, read N- to C-terminus: Kynureninase (437 aa).

Residues Leu-99, Thr-100, 127–130 (FPSD), Ser-183, Asp-212, His-215, and Tyr-237 each bind pyridoxal 5'-phosphate. Lys-238 bears the N6-(pyridoxal phosphate)lysine mark. Pyridoxal 5'-phosphate-binding residues include Trp-267 and Asn-295.

Belongs to the kynureninase family. As to quaternary structure, homodimer. The cofactor is pyridoxal 5'-phosphate.

Its subcellular location is the cytoplasm. It carries out the reaction L-kynurenine + H2O = anthranilate + L-alanine + H(+). It catalyses the reaction 3-hydroxy-L-kynurenine + H2O = 3-hydroxyanthranilate + L-alanine + H(+). It functions in the pathway amino-acid degradation; L-kynurenine degradation; L-alanine and anthranilate from L-kynurenine: step 1/1. The protein operates within cofactor biosynthesis; NAD(+) biosynthesis; quinolinate from L-kynurenine: step 2/3. Its function is as follows. Catalyzes the cleavage of L-kynurenine (L-Kyn) and L-3-hydroxykynurenine (L-3OHKyn) into anthranilic acid (AA) and 3-hydroxyanthranilic acid (3-OHAA), respectively. The polypeptide is Kynureninase (Yarrowia lipolytica (strain CLIB 122 / E 150) (Yeast)).